The chain runs to 357 residues: Eukaryotic translation initiation factor 3 subunit F (357 aa).

Positions 1–82 (MATPAVPVSA…PAPALPGPAL (82 aa)) are disordered. Alanine 2 carries the N-acetylalanine modification. Over residues 9–36 (SAPPATPTPVPAAAPASVPAPTPAPAAA) the composition is skewed to pro residues. The span at 37–74 (PVPAAAPASSSDPAAAAAATAAPGQTPASAQAPAQTPA) shows a compositional bias: low complexity. Residue serine 46 is modified to Phosphoserine; by CDK11; in vitro. The MPN domain occupies 92 to 222 (VRLHPVILAS…IKAYVSTLMG (131 aa)). Residue lysine 238 is modified to N6-acetyllysine. Serine 258 carries the post-translational modification Phosphoserine.

Belongs to the eIF-3 subunit F family. Component of the eukaryotic translation initiation factor 3 (eIF-3) complex, which is composed of 13 subunits: EIF3A, EIF3B, EIF3C, EIF3D, EIF3E, EIF3F, EIF3G, EIF3H, EIF3I, EIF3J, EIF3K, EIF3L and EIF3M. The eIF-3 complex appears to include 3 stable modules: module A is composed of EIF3A, EIF3B, EIF3G and EIF3I; module B is composed of EIF3F, EIF3H, and EIF3M; and module C is composed of EIF3C, EIF3D, EIF3E, EIF3K and EIF3L. EIF3C of module C binds EIF3B of module A and EIF3H of module B, thereby linking the three modules. EIF3J is a labile subunit that binds to the eIF-3 complex via EIF3B. The eIF-3 complex interacts with RPS6KB1 under conditions of nutrient depletion. Mitogenic stimulation leads to binding and activation of a complex composed of MTOR and RPTOR, leading to phosphorylation and release of RPS6KB1 and binding of EIF4B to eIF-3. Interacts with RNF139; the interaction leads to protein translation inhibitions in a ubiquitination-dependent manner. Interacts with DTX1, the interaction is required for deubiquitinating activity towards NOTCH1. Phosphorylation is enhanced upon serum stimulation. Phosphorylated during apoptosis by caspase-processed CDK11.

The protein resides in the cytoplasm. The enzyme catalyses Thiol-dependent hydrolysis of ester, thioester, amide, peptide and isopeptide bonds formed by the C-terminal Gly of ubiquitin (a 76-residue protein attached to proteins as an intracellular targeting signal).. Its function is as follows. Component of the eukaryotic translation initiation factor 3 (eIF-3) complex, which is required for several steps in the initiation of protein synthesis. The eIF-3 complex associates with the 40S ribosome and facilitates the recruitment of eIF-1, eIF-1A, eIF-2:GTP:methionyl-tRNAi and eIF-5 to form the 43S pre-initiation complex (43S PIC). The eIF-3 complex stimulates mRNA recruitment to the 43S PIC and scanning of the mRNA for AUG recognition. The eIF-3 complex is also required for disassembly and recycling of post-termination ribosomal complexes and subsequently prevents premature joining of the 40S and 60S ribosomal subunits prior to initiation. The eIF-3 complex specifically targets and initiates translation of a subset of mRNAs involved in cell proliferation, including cell cycling, differentiation and apoptosis, and uses different modes of RNA stem-loop binding to exert either translational activation or repression. Functionally, deubiquitinates activated NOTCH1, promoting its nuclear import, thereby acting as a positive regulator of Notch signaling. The chain is Eukaryotic translation initiation factor 3 subunit F from Homo sapiens (Human).